A 392-amino-acid polypeptide reads, in one-letter code: Queuine tRNA-ribosyltransferase (392 aa).

Asp92 (proton acceptor) is an active-site residue. Residues 92–96 (DSGGF), Asp146, Gln188, and Gly215 contribute to the substrate site. Residues 246–252 (GVGSPED) form an RNA binding region. The Nucleophile role is filled by Asp265. Positions 270-274 (TRLGR) are RNA binding; important for wobble base 34 recognition. 4 residues coordinate Zn(2+): Cys303, Cys305, Cys308, and His334.

It belongs to the queuine tRNA-ribosyltransferase family. Homodimer. Within each dimer, one monomer is responsible for RNA recognition and catalysis, while the other monomer binds to the replacement base PreQ1. Zn(2+) is required as a cofactor.

The enzyme catalyses 7-aminomethyl-7-carbaguanine + guanosine(34) in tRNA = 7-aminomethyl-7-carbaguanosine(34) in tRNA + guanine. It participates in tRNA modification; tRNA-queuosine biosynthesis. Its function is as follows. Catalyzes the base-exchange of a guanine (G) residue with the queuine precursor 7-aminomethyl-7-deazaguanine (PreQ1) at position 34 (anticodon wobble position) in tRNAs with GU(N) anticodons (tRNA-Asp, -Asn, -His and -Tyr). Catalysis occurs through a double-displacement mechanism. The nucleophile active site attacks the C1' of nucleotide 34 to detach the guanine base from the RNA, forming a covalent enzyme-RNA intermediate. The proton acceptor active site deprotonates the incoming PreQ1, allowing a nucleophilic attack on the C1' of the ribose to form the product. After dissociation, two additional enzymatic reactions on the tRNA convert PreQ1 to queuine (Q), resulting in the hypermodified nucleoside queuosine (7-(((4,5-cis-dihydroxy-2-cyclopenten-1-yl)amino)methyl)-7-deazaguanosine). In Herpetosiphon aurantiacus (strain ATCC 23779 / DSM 785 / 114-95), this protein is Queuine tRNA-ribosyltransferase.